We begin with the raw amino-acid sequence, 210 residues long: Glutathione S-transferase P 10 (210 aa).

The GST N-terminal domain occupies 2 to 81 (AVPQLYYFTI…HLGRVHGLNG (80 aa)). Glutathione is bound by residues tyrosine 8, tryptophan 41, lysine 45, 52–53 (QL), and 65–66 (QT). The 118-residue stretch at 83–200 (NEQEATFLDM…YLEKRKADKV (118 aa)) folds into the GST C-terminal domain.

The protein belongs to the GST superfamily. Pi family. Homodimer. Expressed in cells at the mouth and adjacent to the pharyngeal bulbs of the head and also in the tail.

It catalyses the reaction RX + glutathione = an S-substituted glutathione + a halide anion + H(+). Functionally, conjugation of reduced glutathione to a wide number of exogenous and endogenous hydrophobic electrophiles. Responsible for approximately one-third of 4-hydroxy-2-nonenal conjugation. May play a role in the detoxification of reactive oxygen species produced during pathogenic bacterial infection. The chain is Glutathione S-transferase P 10 from Caenorhabditis elegans.